A 258-amino-acid chain; its full sequence is Acetylglutamate kinase (258 aa).

Residues 44–45, R66, and N158 each bind substrate; that span reads GG. Residues 181-186 and 209-211 each bind ATP; these read DVSGIL and IIT.

This sequence belongs to the acetylglutamate kinase family. ArgB subfamily. In terms of assembly, homodimer.

It is found in the cytoplasm. It catalyses the reaction N-acetyl-L-glutamate + ATP = N-acetyl-L-glutamyl 5-phosphate + ADP. It participates in amino-acid biosynthesis; L-arginine biosynthesis; N(2)-acetyl-L-ornithine from L-glutamate: step 2/4. Its function is as follows. Catalyzes the ATP-dependent phosphorylation of N-acetyl-L-glutamate. In Yersinia pestis bv. Antiqua (strain Antiqua), this protein is Acetylglutamate kinase.